Reading from the N-terminus, the 324-residue chain is Disintegrin-like/cysteine-rich protein MPIII-3 (324 aa).

An N-terminal signal peptide occupies residues 1–20 (MIQVLLVIICLAVFPYQVSS). A propeptide spans 21-173 (IILESGNINN…DEDPKKCEFR (153 aa)) (or 174 (in a minor form)). Residues 168 to 207 (KKCEFRRAGTECRPARSECDVAEYCTGQSAECPTDVFHSN) form the Disintegrin; truncated domain. Residues 179-192 (CRPARSECDVAEYC) form an inhibits platelet aggregation region. 9 disulfide bridges follow: cysteine 179–cysteine 199, cysteine 186–cysteine 218, cysteine 192–cysteine 199, cysteine 211–cysteine 223, cysteine 230–cysteine 280, cysteine 245–cysteine 287, cysteine 258–cysteine 268, cysteine 275–cysteine 312, and cysteine 306–cysteine 317. The D/ECD-tripeptide signature appears at 185 to 187 (ECD). Aspartate 187 and glutamate 190 together coordinate Ca(2+). Positions 202 and 203 each coordinate Ca(2+). The N-linked (GlcNAc...) asparagine glycan is linked to asparagine 237.

This sequence belongs to the venom metalloproteinase (M12B) family. P-III subfamily. P-IIIe sub-subfamily. Monomer. Is able to form a homodimer. N-glycosylated. Exists in at least six differently N-glycosylated forms. The glycans likely have a stabilizing purpose. In terms of processing, cys-199 forms a disulfide bond with Cys-192 in 90% and with Cys-179 in 10% of the protein molecules; alternative disulfide bonds may have a major effect on the conformation of the protein. In terms of tissue distribution, expressed by the venom gland (at protein level). Expressed by the venom gland.

The protein localises to the secreted. Its activity is regulated as follows. Activity may be regulated by the intramolecular thiol-disulfide exchange or disulfide bond switching. In terms of biological role, abolishes platelet aggregation induced by collagen, ADP (IC(50)=292 nM) and arachidonic-acid. The inhibition of collagen-induced platelet aggregation may be due to its ability to bind collagen and block the binding site on collagen for platelets and/or to its ability to bind to the platelet alpha-2/beta-1 collagen receptor (ITGA2/ITGB1) to block its interaction with collagen and hence prevent platelet stimulation. The inhibition of ADP- or arachidonic-acid-induced platelet aggregation may be due to it acting as an antagonist of the ADP receptors or thromboxane-prostanoid receptors of the platelets, respectively. Does not interact with integrins alpha-IIb (ITGA2B) or beta-3 (ITGB3) nor platelet glycoproteins VI (GP6) or IX (GP9) in vitro, however, the detection is dependent on experimental conditions and may happen in vivo. Able to bind to platelet glycoprotein Ib alpha chain (GP1BA) receptor in vitro, although this interaction may have pathologically only limited effect in vivo as it is not able to abolish the von Willebrand factor (vWF)-dependent platelet agglutination induced by ristocetin. Does not affect blood coagulation. The chain is Disintegrin-like/cysteine-rich protein MPIII-3 from Vipera ammodytes ammodytes (Western sand viper).